A 1022-amino-acid chain; its full sequence is Sodium/potassium-transporting ATPase subunit alpha-1 (1022 aa).

A propeptide spanning residues M1–T5 is cleaved from the precursor. A compositionally biased stretch (basic and acidic residues) spans M1–Y10. The interval M1 to L34 is disordered. Residues G6 to P86 are Cytoplasmic-facing. Phosphoserine; by PKC is present on S16. Positions P81–P83 are interaction with phosphoinositide-3 kinase. A helical transmembrane segment spans residues E87 to A107. Residues I108–Y130 are Extracellular-facing. The chain crosses the membrane as a helical span at residues L131–A151. Residues K152–I287 are Cytoplasmic-facing. Positions D213 to N234 are disordered. The helical transmembrane segment at E288–I307 threads the bilayer. Topologically, residues L308 to A319 are extracellular. Residues V320–A337 traverse the membrane as a helical segment. Over T338–L771 the chain is Cytoplasmic. Catalysis depends on D375, which acts as the 4-aspartylphosphate intermediate. ATP is bound at residue K486. Residues D716 and D720 each contribute to the Mg(2+) site. The helical transmembrane segment at K772–L791 threads the bilayer. Over F792–L801 the chain is Extracellular. The helical transmembrane segment at G802–A822 threads the bilayer. Residues Y823–K842 are Cytoplasmic-facing. Residues L843–F865 form a helical membrane-spanning segment. The Extracellular segment spans residues F866–C917. The helical transmembrane segment at H918–K937 threads the bilayer. The Cytoplasmic portion of the chain corresponds to T938–N950. S942 carries the phosphoserine; by PKA modification. A helical membrane pass occupies residues K951–Y969. Topologically, residues C970–P984 are extracellular. Residues S985–R1005 traverse the membrane as a helical segment. At F1006–Y1022 the chain is on the cytoplasmic side.

It belongs to the cation transport ATPase (P-type) (TC 3.A.3) family. Type IIC subfamily. The sodium/potassium-transporting ATPase is composed of a catalytic alpha subunit, an auxiliary non-catalytic beta subunit and an additional regulatory subunit.

It localises to the cell membrane. Its subcellular location is the sarcolemma. The enzyme catalyses K(+)(out) + Na(+)(in) + ATP + H2O = K(+)(in) + Na(+)(out) + ADP + phosphate + H(+). Its function is as follows. This is the catalytic component of the active enzyme, which catalyzes the hydrolysis of ATP coupled with the exchange of sodium and potassium ions across the plasma membrane. This action creates the electrochemical gradient of sodium and potassium ions, providing the energy for active transport of various nutrients. The polypeptide is Sodium/potassium-transporting ATPase subunit alpha-1 (atp1a1) (Anguilla anguilla (European freshwater eel)).